An 88-amino-acid polypeptide reads, in one-letter code: Small integral membrane protein 13 (88 aa).

A helical transmembrane segment spans residues 10–30 (LVFVATLLIVLLLMVCGWYFV). Over residues 48 to 61 (TGSQEGDNEQPSGS) the composition is skewed to polar residues. The segment at 48-88 (TGSQEGDNEQPSGSETEEDPSASPQKIRSARQRRPPVDAGH) is disordered. Phosphoserine occurs at positions 59 and 61. Threonine 63 is subject to Phosphothreonine. Serine 70 carries the post-translational modification Phosphoserine.

Belongs to the SMIM13 family.

Its subcellular location is the membrane. This Mus musculus (Mouse) protein is Small integral membrane protein 13 (Smim13).